Reading from the N-terminus, the 600-residue chain is Transcription factor rlmA (600 aa).

The 61-residue stretch at 1-61 (MGRRKIEIKA…KKLYEFSSCD (61 aa)) folds into the MADS-box domain. 2 disordered regions span residues 71–518 (YYGP…NIET) and 544–600 (GFGR…KSKT). The span at 75-89 (PHEHKGPEDFNGKRD) shows a compositional bias: basic and acidic residues. The segment covering 151 to 160 (PQPQGASRPS) has biased composition (polar residues). Pro residues predominate over residues 222–242 (QPLPPHAIPPHPMPQPVPPHH). Positions 243–260 (QAPQHLPQHPHPLAQQTP) are enriched in low complexity. Polar residues predominate over residues 328–339 (HQRSLSSKSRSI). Over residues 364-384 (PRTESADVKAEAKQNDSKEIK) the composition is skewed to basic and acidic residues. The span at 386-397 (PAQPVAPPPPPR) shows a compositional bias: pro residues. Positions 440-452 (RGSATADSSSSTG) are enriched in low complexity. The span at 453-468 (NQTVTPAKANPDTNHS) shows a compositional bias: polar residues. Over residues 490–501 (PPNPFARPPPPG) the composition is skewed to pro residues. Positions 503 to 515 (ASQNSNAYNSNNN) are enriched in low complexity.

Belongs to the MEF2 family. Interacts with hsp90. Phosphorylation during asexual development.

The protein localises to the nucleus. Its function is as follows. Transcription factor; part of cell wall integrity (CWI) signaling pathway composed of pkcA, the bck1-mkk2-mpka MAPK cascade and the downstream rlmA transcription regulator. The CWI signaling pathway regulates cell wall integrity and pyomelanin formation. CWI also controls oxidative stress response, gliotoxin production, iron adaptation and asexual development. Finally, CWI is constitutively required for A.fumigatus to cope with the temperature increase found in the mammalian lung environment, during infection. Positively regulates the phosphorylation of mpkA. Involved in tolerance to oxidative damage and transcriptional regulation of genes related to oxidative stress adaptation. Directly regulates the expression of regulators of conidiation, including flbB, flbC, brlA, abaA, and rasB, as well as genes involved in cell wall synthesis and remodeling. Specifically associates with the target fumiquinazoline (fmq) cluster genes promoters at conserved motifs (5'-TAWWWWTA-3') during conidiation to supplement mature conidia with fumiquinazoline C. Also controls the DHN-melanin production via binding the promoter of pksP. The protein is Transcription factor rlmA of Aspergillus fumigatus (strain ATCC MYA-4609 / CBS 101355 / FGSC A1100 / Af293) (Neosartorya fumigata).